We begin with the raw amino-acid sequence, 163 residues long: Large ribosomal subunit protein uL15 (163 aa).

Belongs to the universal ribosomal protein uL15 family. As to quaternary structure, part of the 50S ribosomal subunit.

Binds to the 23S rRNA. This Orientia tsutsugamushi (strain Ikeda) (Rickettsia tsutsugamushi) protein is Large ribosomal subunit protein uL15.